We begin with the raw amino-acid sequence, 971 residues long: Protein ALWAYS EARLY 1 (971 aa).

The segment covering 1-11 (MAPTRKSKSVN) has biased composition (basic residues). 5 disordered regions span residues 1–40 (MAPT…LADK), 117–137 (SESE…LKRK), 197–260 (IEDF…MFEN), 326–371 (GLLE…GLED), and 421–507 (PKES…KISL). One can recognise an SANT domain in the interval 40–98 (KLGPQWTKRELVRFYDAYRKYVGDWKKVAAAVRNNRSVEMVETLFCMNRAYLSLPEGTA). Composition is skewed to basic and acidic residues over residues 209–219 (KQLDADDDASR), 332–350 (SSPH…KKSN), and 424–440 (STQD…EVDS). Over residues 450-470 (SSQGPAKQLKTAKTTVESSSA) the composition is skewed to polar residues.

As to expression, expressed ubiquitously in vegetative and reproductive tissues.

Its subcellular location is the nucleus. This chain is Protein ALWAYS EARLY 1 (ALY1), found in Arabidopsis thaliana (Mouse-ear cress).